Reading from the N-terminus, the 82-residue chain is Cytochrome b559 subunit alpha (82 aa).

The chain crosses the membrane as a helical span at residues 22 to 36; it reads VIHAVTLPSIFLAGY. H24 provides a ligand contact to heme.

This sequence belongs to the PsbE/PsbF family. In terms of assembly, heterodimer of an alpha subunit and a beta subunit. PSII is composed of 1 copy each of membrane proteins PsbA, PsbB, PsbC, PsbD, PsbE, PsbF, PsbH, PsbI, PsbJ, PsbK, PsbL, PsbM, PsbT, PsbX, PsbY, Psb30/Ycf12, peripheral proteins PsbO, CyanoQ (PsbQ), PsbU, PsbV and a large number of cofactors. It forms dimeric complexes. It depends on heme b as a cofactor.

Its subcellular location is the cellular thylakoid membrane. Its function is as follows. This b-type cytochrome is tightly associated with the reaction center of photosystem II (PSII). PSII is a light-driven water:plastoquinone oxidoreductase that uses light energy to abstract electrons from H(2)O, generating O(2) and a proton gradient subsequently used for ATP formation. It consists of a core antenna complex that captures photons, and an electron transfer chain that converts photonic excitation into a charge separation. This chain is Cytochrome b559 subunit alpha, found in Prochlorococcus marinus (strain MIT 9303).